A 1037-amino-acid chain; its full sequence is MVDALNLGRRLRVRSTAYVASELVPFFWPMRNFISRNPLRRLESMPFEQAVRRGAALFHARMFLPRGDYQRWRREGKVRPETLDEEIGRRSQDLPPVPGVDWPRWLHALMQTPHDRDAVVRGVRAKDVHAALRGHPPSAQAVDVAALLPELEQRLHARTLPEAVDALWGTGLADELDDLVIKSYLDFFDEDQSAWRMPGRERGLFSAWSEVTRRNARMVLRRLHVRHILDHVQDAESAVVYVMEEMGIGAEAWPTYFTRVLTRLHGWTGFVRWRASAKHYYWAQQYPADIVDLLAIRLVMGLALLQESARHRGTPMRRDDLGAVVRERGAECVLRYALHSGEVLPDWAQRIDDTLSRGNGARCHDLLQRYWPLWQARLGQQQAAALRELAAAANATAALDALAPEDVEGLLQGLRDFAPQEGMVWTLAMEGQAIDKLLTQVQAPQDPPPDKRPFAQALFCIDVRAEPIRRHLERVGNYQTFGIAGFFGVPVGFLGYGKGSESHYCPAVITPKNLVLELPAALDPHNEDFVSTLGHVLHDLKKSVLSPYVTVEAVGMLFGLDLFGKTLAPLGYSRWRRRIDTEKPVTRLLVDKLSREQADSIIRTLQRAMIVKALHTELKIERERVDSGIIRELREIALRRRDGPTRLRTTFGVPQTQETEFIDKLRQVYGVDADYTNHQLERLGRIGYSLDEQVNYVHTALTMIGLTQTFSRFVLVVGHGGKTENNPYESALDCGACGGASGIVNARVFAQMANKAAVRERLAAMGITIPEDTWFMPALHVTTTDAIELFDLDLLPPRHLVYLERLRNSLRAASRLTAAERMPKLLPEAKALEPAEALRLANRLAVDWAQVRPEWGLSGNVYGIVGRRALTENSDLQGSAFLLSYDWRCDPRGRLLENLLTGPVVVGQWINLEYFFSTVDNSRLGSGSKVYHNVSGRFGVMTGSLSDLRTGLPMQTVMREGRPYHEPMRLIALIEAPLDFAGRVLERVVKVKSLVLGGWIRAIVIDPTQGYKPFVFNNGQWEERTPLIAPAEKEYSA.

Positions 460, 462, 719, and 734 each coordinate Zn(2+).

It belongs to the inorganic carbon transporter (TC 9.A.2) DabA family. As to quaternary structure, forms a complex with DabB. It depends on Zn(2+) as a cofactor.

The protein resides in the cell inner membrane. In terms of biological role, part of an energy-coupled inorganic carbon pump. The protein is Probable inorganic carbon transporter subunit DabA 2 of Nitrobacter winogradskyi (strain ATCC 25391 / DSM 10237 / CIP 104748 / NCIMB 11846 / Nb-255).